We begin with the raw amino-acid sequence, 512 residues long: Opioid growth factor receptor-like protein 1 (512 aa).

Disordered stretches follow at residues 1–72 (MGNI…ETGT), 323–469 (IWGP…TCCK), and 488–512 (SLSP…GPFT). Composition is skewed to acidic residues over residues 28–54 (GGEE…DNEE) and 62–71 (TNEGGEEETG). Positions 328–337 (DKQKADENKA) are enriched in basic and acidic residues. Positions 347 to 361 (QKKHSHVEKKSRPAK) are enriched in basic residues. Residues 408–421 (TVTSENNSSKTGQT) are compositionally biased toward polar residues. Residues 449 to 468 (RSLDTEHDLKRPEADRETCC) are compositionally biased toward basic and acidic residues. Residues 490–499 (SPGTSNSNVT) show a composition bias toward polar residues.

The protein belongs to the opioid growth factor receptor family.

In Xenopus tropicalis (Western clawed frog), this protein is Opioid growth factor receptor-like protein 1 (ogfrl1).